Reading from the N-terminus, the 473-residue chain is MKILYSLRRFYHVETLFNGTFVLAGRDQETTGFAWWAGNARLINLSGKLLGAHVAHAGLIVFWAGAMNLFEVAHFVPEKPMYEQGLILLPHLATLGWGVGPGGEVLDTFPYFVSGVLHLISSAVLGFGGIYHALLGPETLEESFPFFGYVWKDRNKMTTILGIHLILLGLGAFLLVLKALYFGGVYDTWAPGGGDVRKITNLTLSPGVIFGYLLKSPFGGEGWIVSVDDLEDIIGGHVWLGSICVLGGIWHILTKPFAWARRAFVWSGEAYLSYSLGALSVFGFIACCFVWFNNTAYPSEFYGPTGPEASQAQAFTFLVRDQRLGANVGSAQGPTGLGKYLMRSPTGEVIFGGETMRFWDLRAPWLEPLRGPNGLDLSRLKKDIQPWQERRSAEYMTHAPLGSLNSVGGVATEINAVNYVSPRSWLATSHFVLGFFFFVGHLWHAGRARAAAAGFEKGIDRDLEPVLYMTPLN.

Residues 1 to 14 constitute a propeptide that is removed on maturation; it reads MKILYSLRRFYHVE. Thr-15 carries the post-translational modification N-acetylthreonine. Thr-15 is subject to Phosphothreonine. 5 helical membrane passes run 69–93, 134–155, 178–200, 255–275, and 291–312; these read LFEV…PHLA, LLGP…KDRN, KALY…RKIT, KPFA…LSYS, and WFNN…ASQA. Glu-367 serves as a coordination point for [CaMn4O5] cluster. Residues 447 to 471 form a helical membrane-spanning segment; that stretch reads RARAAAAGFEKGIDRDLEPVLYMTP.

It belongs to the PsbB/PsbC family. PsbC subfamily. As to quaternary structure, PSII is composed of 1 copy each of membrane proteins PsbA, PsbB, PsbC, PsbD, PsbE, PsbF, PsbH, PsbI, PsbJ, PsbK, PsbL, PsbM, PsbT, PsbX, PsbY, PsbZ, Psb30/Ycf12, at least 3 peripheral proteins of the oxygen-evolving complex and a large number of cofactors. It forms dimeric complexes. The cofactor is Binds multiple chlorophylls and provides some of the ligands for the Ca-4Mn-5O cluster of the oxygen-evolving complex. It may also provide a ligand for a Cl- that is required for oxygen evolution. PSII binds additional chlorophylls, carotenoids and specific lipids..

It is found in the plastid. The protein localises to the chloroplast thylakoid membrane. In terms of biological role, one of the components of the core complex of photosystem II (PSII). It binds chlorophyll and helps catalyze the primary light-induced photochemical processes of PSII. PSII is a light-driven water:plastoquinone oxidoreductase, using light energy to abstract electrons from H(2)O, generating O(2) and a proton gradient subsequently used for ATP formation. The chain is Photosystem II CP43 reaction center protein from Sorghum bicolor (Sorghum).